The chain runs to 154 residues: Myoglobin (154 aa).

A Globin domain is found at 2–148; sequence GLSDAEWQLV…FRNDIAAKYK (147 aa). Ser4 carries the phosphoserine modification. His65 contributes to the nitrite binding site. O2 is bound at residue His65. Thr68 is modified (phosphothreonine). His94 provides a ligand contact to heme b.

Belongs to the globin family. Monomeric.

It localises to the cytoplasm. Its subcellular location is the sarcoplasm. The catalysed reaction is Fe(III)-heme b-[protein] + nitric oxide + H2O = Fe(II)-heme b-[protein] + nitrite + 2 H(+). It catalyses the reaction H2O2 + AH2 = A + 2 H2O. Functionally, monomeric heme protein which primary function is to store oxygen and facilitate its diffusion within muscle tissues. Reversibly binds oxygen through a pentacoordinated heme iron and enables its timely and efficient release as needed during periods of heightened demand. Depending on the oxidative conditions of tissues and cells, and in addition to its ability to bind oxygen, it also has a nitrite reductase activity whereby it regulates the production of bioactive nitric oxide. Under stress conditions, like hypoxia and anoxia, it also protects cells against reactive oxygen species thanks to its pseudoperoxidase activity. This Orycteropus afer (Aardvark) protein is Myoglobin (MB).